We begin with the raw amino-acid sequence, 306 residues long: LysM and putative peptidoglycan-binding domain-containing protein 3 (306 aa).

The Extracellular segment spans residues 1 to 217 (MAGRHQNRSF…PYYGADWGIG (217 aa)). The N-linked (GlcNAc...) asparagine glycan is linked to Asn7. Ser55 is modified (phosphoserine). Positions 65-109 (LTKDIQEGDTLNAIALQYCCTVADIKRVNNLISDQDFFALRSIKI) constitute a LysM domain. Residues 218–238 (WWTAVVIMLIVGIITPVFYLL) traverse the membrane as a helical segment. At 239-306 (YYEILAKVDV…SQSPAAQQET (68 aa)) the chain is on the cytoplasmic side.

The protein resides in the cell membrane. It is found in the golgi apparatus. Functionally, essential for Golgi structural integrity. The protein is LysM and putative peptidoglycan-binding domain-containing protein 3 (LYSMD3) of Homo sapiens (Human).